Reading from the N-terminus, the 807-residue chain is Dynein axonemal intermediate chain 4 (807 aa).

2 stretches are compositionally biased toward polar residues: residues 1–11 (MHSSPTSTRKQ) and 22–31 (PRKSISFINP). Disordered regions lie at residues 1–44 (MHSS…AASN) and 300–320 (YSSK…DSES). The segment covering 32 to 43 (SKSSAGKGYAAS) has biased composition (low complexity). Basic and acidic residues predominate over residues 308 to 317 (AKDRDPKIQD). 6 WD repeats span residues 493 to 533 (QSSY…NIPV), 542 to 590 (KHLG…DCHD), 617 to 657 (SRQA…QYLE), 661 to 701 (GHKG…PFLS), 704 to 743 (PTTY…LDPL), and 749 to 788 (NPGI…TASD).

Part of the multisubunit axonemal dynein complex formed at least of two heavy chains and a number of intermediate and light chains. Associated with axonemal dynein subunits such as, DNAH2, DNAI3, and DYNLT1. Interacts with DYNLT1. In terms of tissue distribution, highly expressed in tissues containing motile cilia, including the trachea, lung, oviduct, and testis.

The protein resides in the cytoplasm. Its subcellular location is the cytoskeleton. It is found in the flagellum axoneme. It localises to the cilium axoneme. The protein localises to the dynein axonemal particle. Functionally, plays a critical role in the assembly of axonemal dynein complex, thereby playing a role in ciliary motility. The chain is Dynein axonemal intermediate chain 4 (Dnai4) from Mus musculus (Mouse).